A 648-amino-acid polypeptide reads, in one-letter code: MATGIASGCGQLHLRKPVYLRNSYGNKAHCHSNVILNGTQNQIAWSSWVSNVLRVNRSSYPECQVIKTNWKSSRGTIKSCQQRDGSVTRYFDFTVIGSGIAGLRYALEVAKHGTVAVITKAEPHESSTNYAQGGVSAVLCPLDSVESHMQDTIVAGAYLCDKETVRVVCTEGPERIRELIAMGASFDHGEDGNLDLAREGGHSHRRIVHAADMTGREIERALLEAVFKNPNIHVFQHHFAIDLLTTQDGSDIVCHGVDTIHTETKEVIRFISKVTLLASGGVGHIYPSTTNPTVATGDGMAMAHRAQAVISNMEFVQFHPTALADEGLPNIPSARENAFLITEAVRGDGGILYNLDMERFMPMYDERAELAPRDVVARSIDDQLKKRGEKYVLLDISHKPREKVLSHFPNIAAECLRHGLDITQQPIPVVPAAHYMCGGVRAGLEGETNVQGLYVAGEVACTGLHGANRLASNSLLEALVFARRAVQPSIDHVNVSRIDHGASSWWPRPVAPMVLGDTVLNKVICRTREVRKELQSIMWEYVGIVRSNSRLNTAEKRIRELELEWETYLFQHGWEPTMVGVEACEMRNLFCCANLVVSSALSRHESRGLHYTTDFPHVEESERLPTVIFPSQRNNSWSSRQLHAQPIS.

Residues 98 to 101 (SGIA), Lys-120, 127 to 134 (STNYAQGG), and Asp-298 each bind FAD. Arg-373 serves as the catalytic Proton donor/acceptor. Residues Glu-458 and 474 to 475 (SL) each bind FAD.

The protein belongs to the FAD-dependent oxidoreductase 2 family. NadB subfamily. Requires FAD as cofactor.

It is found in the plastid. The protein resides in the chloroplast. It carries out the reaction L-aspartate + O2 = iminosuccinate + H2O2. It functions in the pathway alkaloid biosynthesis; nicotine biosynthesis. It participates in cofactor biosynthesis; NAD(+) biosynthesis; iminoaspartate from L-aspartate (oxidase route): step 1/1. Its function is as follows. Involved in the biosynthesis of pyridine alkaloid natural products, leading mainly to the production of anabasine, anatabine, nicotine and nornicotine, effective deterrents against herbivores with antiparasitic and pesticide properties (neurotoxins); nornicotine serves as the precursor in the synthesis of the carcinogen compound N'-nitrosonornicotine (NNN). Catalyzes the oxidation of L-aspartate to iminoaspartate. The chain is L-aspartate oxidase 2-b, chloroplastic from Nicotiana tabacum (Common tobacco).